Reading from the N-terminus, the 479-residue chain is UDP-N-acetylmuramate--L-alanine ligase (479 aa).

Position 124 to 130 (124 to 130 (GSHGKTT)) interacts with ATP.

It belongs to the MurCDEF family.

Its subcellular location is the cytoplasm. It catalyses the reaction UDP-N-acetyl-alpha-D-muramate + L-alanine + ATP = UDP-N-acetyl-alpha-D-muramoyl-L-alanine + ADP + phosphate + H(+). Its pathway is cell wall biogenesis; peptidoglycan biosynthesis. Functionally, cell wall formation. The protein is UDP-N-acetylmuramate--L-alanine ligase of Synechococcus sp. (strain RCC307).